The primary structure comprises 35 residues: Probable protein L3 (35 aa).

This is Probable protein L3 from Odocoileus virginianus papillomavirus 1 (DPV).